The primary structure comprises 229 residues: Putative N-acetylmannosamine-6-phosphate 2-epimerase (229 aa).

This sequence belongs to the NanE family.

It catalyses the reaction an N-acyl-D-glucosamine 6-phosphate = an N-acyl-D-mannosamine 6-phosphate. Its pathway is amino-sugar metabolism; N-acetylneuraminate degradation; D-fructose 6-phosphate from N-acetylneuraminate: step 3/5. Functionally, converts N-acetylmannosamine-6-phosphate (ManNAc-6-P) to N-acetylglucosamine-6-phosphate (GlcNAc-6-P). This chain is Putative N-acetylmannosamine-6-phosphate 2-epimerase, found in Shigella flexneri serotype 5b (strain 8401).